A 267-amino-acid polypeptide reads, in one-letter code: Palmitoyltransferase ZDHHC12 (267 aa).

Residues 1-9 lie on the Cytoplasmic side of the membrane; it reads MAPWALLSP. The helical transmembrane segment at 10–30 threads the bilayer; the sequence is GVLVRTGHTVLTWGITLVLFL. At 31-43 the chain is on the lumenal side; it reads HDTELRQWEEQGE. The chain crosses the membrane as a helical span at residues 44–64; sequence LLLPLTFLLLVLGSLLLYLAV. Topologically, residues 65-140 are cytoplasmic; it reads SLMDPGYVNV…ENCVGERNHP (76 aa). The DHHC domain occupies 97-147; that stretch reads RRCRYCLVLQPLRARHCRECRRCVRRYDHHCPWMENCVGERNHPLFVVYLA. Residue Cys-127 is the S-palmitoyl cysteine intermediate of the active site. Residues 141 to 161 traverse the membrane as a helical segment; the sequence is LFVVYLALQLVVLLWGLYLAW. The Lumenal portion of the chain corresponds to 162–178; that stretch reads SGLRFFQPWGQWLRSSG. Residues 179-199 form a helical membrane-spanning segment; the sequence is LLFATFLLLSLFSLVASLLLV. Residues 200–267 are Cytoplasmic-facing; the sequence is SHLYLVASNT…EEEEGSSPAV (68 aa).

The protein belongs to the DHHC palmitoyltransferase family. As to expression, widely expressed.

The protein localises to the golgi apparatus membrane. It is found in the endoplasmic reticulum membrane. The catalysed reaction is L-cysteinyl-[protein] + hexadecanoyl-CoA = S-hexadecanoyl-L-cysteinyl-[protein] + CoA. Functionally, palmitoyltransferase that catalyzes the addition of palmitate onto various protein substrates. Has a palmitoyltransferase activity toward gephyrin/GPHN, regulating its clustering at synapses and its function in gamma-aminobutyric acid receptor clustering. Thereby, indirectly regulates GABAergic synaptic transmission. Negatively regulates NLRP3-driven inflammation. Catalyzes NLRP3 palmitoylation, leading to its degradation via the chaperone-mediated autophagy (CMA) process. The chain is Palmitoyltransferase ZDHHC12 from Homo sapiens (Human).